Here is a 115-residue protein sequence, read N- to C-terminus: Large ribosomal subunit protein bL19 (115 aa).

Belongs to the bacterial ribosomal protein bL19 family.

In terms of biological role, this protein is located at the 30S-50S ribosomal subunit interface and may play a role in the structure and function of the aminoacyl-tRNA binding site. This is Large ribosomal subunit protein bL19 from Buchnera aphidicola subsp. Acyrthosiphon pisum (strain 5A).